The chain runs to 180 residues: Large ribosomal subunit protein uL6 (180 aa).

Belongs to the universal ribosomal protein uL6 family. In terms of assembly, part of the 50S ribosomal subunit.

Its function is as follows. This protein binds to the 23S rRNA, and is important in its secondary structure. It is located near the subunit interface in the base of the L7/L12 stalk, and near the tRNA binding site of the peptidyltransferase center. This chain is Large ribosomal subunit protein uL6, found in Clostridium beijerinckii (strain ATCC 51743 / NCIMB 8052) (Clostridium acetobutylicum).